The following is a 436-amino-acid chain: 23S rRNA (uracil(1939)-C(5))-methyltransferase RlmD (436 aa).

Residues 10-68 (KQKTTQKIVAEIQDLDYQGLGVAKIQGKTWFIENALPTEKVEAVVTDEKRQYGLATAQK) form the TRAM domain. Residues cysteine 81, cysteine 87, cysteine 90, and cysteine 168 each coordinate [4Fe-4S] cluster. The S-adenosyl-L-methionine site is built by glutamine 270, phenylalanine 299, asparagine 304, glutamate 320, aspartate 347, and aspartate 368. Cysteine 394 (nucleophile) is an active-site residue.

The protein belongs to the class I-like SAM-binding methyltransferase superfamily. RNA M5U methyltransferase family. RlmD subfamily.

It carries out the reaction uridine(1939) in 23S rRNA + S-adenosyl-L-methionine = 5-methyluridine(1939) in 23S rRNA + S-adenosyl-L-homocysteine + H(+). Its function is as follows. Catalyzes the formation of 5-methyl-uridine at position 1939 (m5U1939) in 23S rRNA. In Haemophilus parainfluenzae (strain T3T1), this protein is 23S rRNA (uracil(1939)-C(5))-methyltransferase RlmD.